The following is a 420-amino-acid chain: Anaerobic glycerol-3-phosphate dehydrogenase subunit B (420 aa).

It belongs to the anaerobic G-3-P dehydrogenase subunit B family. In terms of assembly, composed of a catalytic GlpA/B dimer and of membrane bound GlpC. Requires FMN as cofactor.

It carries out the reaction a quinone + sn-glycerol 3-phosphate = dihydroxyacetone phosphate + a quinol. Its pathway is polyol metabolism; glycerol degradation via glycerol kinase pathway; glycerone phosphate from sn-glycerol 3-phosphate (anaerobic route): step 1/1. In terms of biological role, conversion of glycerol 3-phosphate to dihydroxyacetone. Uses fumarate or nitrate as electron acceptor. The polypeptide is Anaerobic glycerol-3-phosphate dehydrogenase subunit B (Pectobacterium atrosepticum (strain SCRI 1043 / ATCC BAA-672) (Erwinia carotovora subsp. atroseptica)).